The chain runs to 245 residues: Probable phosphatase YcdX (245 aa).

Zn(2+) is bound by residues histidine 7, histidine 9, histidine 15, histidine 40, glutamate 73, histidine 101, histidine 131, aspartate 192, and histidine 194.

Belongs to the PHP family. Homotrimer. It depends on Zn(2+) as a cofactor.

This chain is Probable phosphatase YcdX, found in Escherichia coli O127:H6 (strain E2348/69 / EPEC).